A 54-amino-acid polypeptide reads, in one-letter code: Photoreceptor disk component PRCD (54 aa).

Cys-2 carries S-palmitoyl cysteine lipidation. The tract at residues 24 to 54 (QPEPNGVDGAVSGSSLETDLQSSGREKEPLK) is disordered. The span at 35-46 (SGSSLETDLQSS) shows a compositional bias: polar residues.

It belongs to the PRCD family. In terms of assembly, interacts with RHO/rhodopsin; the interaction promotes PRCD stability. Palmitoylated at Cys-2. Palmitoylation is essential for protein stability and trafficking to the photoreceptor outer segment, but does not appear to be essential for membrane localization. Probably palmitoylated by ZDHHC3. In terms of processing, phosphorylated. In terms of tissue distribution, expressed in retina (at protein level).

The protein resides in the cell projection. It is found in the cilium. Its subcellular location is the photoreceptor outer segment. It localises to the membrane. The protein localises to the endoplasmic reticulum. The protein resides in the golgi apparatus. Functionally, involved in vision. In Bos taurus (Bovine), this protein is Photoreceptor disk component PRCD.